The chain runs to 647 residues: Putative lipase atg15 (647 aa).

Over 1-18 (MLPSGKRKADAFSCTSAA) the chain is Cytoplasmic. The helical; Signal-anchor for type II membrane protein transmembrane segment at 19–39 (RVTAKLALSFLALSTTPLVNA) threads the bilayer. Topologically, residues 40 to 647 (FSYEEPNAQI…EGGEGPVNDL (608 aa)) are lumenal. N-linked (GlcNAc...) asparagine glycans are attached at residues Asn-203, Asn-225, Asn-283, and Asn-307. Residue Ser-323 is the Charge relay system of the active site. Asn-469 carries N-linked (GlcNAc...) asparagine glycosylation. Residues 597 to 626 (APALPSSVLTPSATATPPEGQPDDSGKRCR) form a disordered region.

The protein belongs to the AB hydrolase superfamily. Lipase family. In terms of assembly, binds to both phosphatidylinositol (PI) and phosphatidylinositol 3,5-bisphosphate (PIP2).

It is found in the endosome. It localises to the multivesicular body membrane. The protein resides in the prevacuolar compartment membrane. The catalysed reaction is a triacylglycerol + H2O = a diacylglycerol + a fatty acid + H(+). Functionally, lipase which is essential for lysis of subvacuolar cytoplasm to vacuole targeted bodies and intravacuolar autophagic bodies. Involved in the lysis of intravacuolar multivesicular body (MVB) vesicles. The intravacuolar membrane disintegration by atg15 is critical to life span extension. This chain is Putative lipase atg15 (atg15), found in Neurospora crassa (strain ATCC 24698 / 74-OR23-1A / CBS 708.71 / DSM 1257 / FGSC 987).